We begin with the raw amino-acid sequence, 278 residues long: Orotidine 5'-phosphate decarboxylase (278 aa).

The Proton donor role is filled by Lys-95.

It belongs to the OMP decarboxylase family. Type 2 subfamily.

The enzyme catalyses orotidine 5'-phosphate + H(+) = UMP + CO2. The protein operates within pyrimidine metabolism; UMP biosynthesis via de novo pathway; UMP from orotate: step 2/2. The polypeptide is Orotidine 5'-phosphate decarboxylase (Corynebacterium glutamicum (strain R)).